A 422-amino-acid polypeptide reads, in one-letter code: Adenylosuccinate synthetase (422 aa).

GTP contacts are provided by residues 11–17 and 39–41; these read GDEGKGK and GHT. Residue Asp-12 is the Proton acceptor of the active site. Residues Asp-12 and Gly-39 each contribute to the Mg(2+) site. Residues 12-15, 37-40, Thr-129, Arg-143, Asn-219, Thr-234, and Arg-298 contribute to the IMP site; these read DEGK and NAGH. Residue His-40 is the Proton donor of the active site. 294-300 lines the substrate pocket; that stretch reads VTTGRRR. Residues Arg-300, 326 to 328, and 409 to 411 contribute to the GTP site; these read KLD and GTG.

The protein belongs to the adenylosuccinate synthetase family. Homodimer. Mg(2+) is required as a cofactor.

Its subcellular location is the cytoplasm. It carries out the reaction IMP + L-aspartate + GTP = N(6)-(1,2-dicarboxyethyl)-AMP + GDP + phosphate + 2 H(+). It participates in purine metabolism; AMP biosynthesis via de novo pathway; AMP from IMP: step 1/2. Plays an important role in the de novo pathway and in the salvage pathway of purine nucleotide biosynthesis. Catalyzes the first committed step in the biosynthesis of AMP from IMP. The protein is Adenylosuccinate synthetase of Ajellomyces capsulatus (strain H143) (Darling's disease fungus).